A 365-amino-acid chain; its full sequence is Chorismate synthase (365 aa).

Arg48 provides a ligand contact to NADP(+). FMN is bound by residues 125–127 (RSS), 238–239 (NA), Gly278, 293–297 (KPTSS), and Arg319.

The protein belongs to the chorismate synthase family. In terms of assembly, homotetramer. Requires FMNH2 as cofactor.

It catalyses the reaction 5-O-(1-carboxyvinyl)-3-phosphoshikimate = chorismate + phosphate. Its pathway is metabolic intermediate biosynthesis; chorismate biosynthesis; chorismate from D-erythrose 4-phosphate and phosphoenolpyruvate: step 7/7. Functionally, catalyzes the anti-1,4-elimination of the C-3 phosphate and the C-6 proR hydrogen from 5-enolpyruvylshikimate-3-phosphate (EPSP) to yield chorismate, which is the branch point compound that serves as the starting substrate for the three terminal pathways of aromatic amino acid biosynthesis. This reaction introduces a second double bond into the aromatic ring system. The polypeptide is Chorismate synthase (Marinomonas sp. (strain MWYL1)).